Consider the following 367-residue polypeptide: MEGFDHVTFWVGNALQAATYYIARFGFQNLAYSGLETGNRQFATHVIHQNNIIMAFTSPLTGDNKDYADHMMRHGDGVKDIAFNVKDVQHIYDEAVKAGAQSVKEPHQIKDEHGIVTLATIMSPYGETTHTFVDRSQYKGAFLPGFTYKVASDPLSNITEPVGLNLIDHVVSNHADKMMEPVVQWYEKVLQFHRFWSVDDKTIHTEYSSLRSVVVADKSEKVKLPINEPANGIRKSQIQEYVDFYNGAGVQHIALKTDNIIDAISKLRSRGVSFLTVPKTYYTSLREKLQHSSLEIKEDLDTLEKLHILIDYDDKGYLLQIFTNNVEDKPTVFFEIIQRNNHDGFGAGNFKSLFEAIERQQETRGNL.

2 VOC domains span residues 3–135 and 166–324; these read GFDH…FVDR and LIDH…IFTN. Fe cation-binding residues include H169, H252, and E335.

Belongs to the 4HPPD family. Fe cation is required as a cofactor.

It catalyses the reaction 3-(4-hydroxyphenyl)pyruvate + O2 = homogentisate + CO2. It participates in amino-acid degradation; L-phenylalanine degradation; acetoacetate and fumarate from L-phenylalanine: step 3/6. Functionally, key enzyme in the degradation of tyrosine. The chain is 4-hydroxyphenylpyruvate dioxygenase (hpd) from Dictyostelium discoideum (Social amoeba).